The primary structure comprises 373 residues: Glutamate 5-kinase (373 aa).

K15 is a binding site for ATP. The substrate site is built by S55, D142, and N154. ATP is bound by residues 174–175 (TD) and 216–222 (TGGMATK). The 79-residue stretch at 281–359 (AGSIVVDAGA…SEIERILGFR (79 aa)) folds into the PUA domain.

The protein belongs to the glutamate 5-kinase family.

It is found in the cytoplasm. The enzyme catalyses L-glutamate + ATP = L-glutamyl 5-phosphate + ADP. It participates in amino-acid biosynthesis; L-proline biosynthesis; L-glutamate 5-semialdehyde from L-glutamate: step 1/2. Functionally, catalyzes the transfer of a phosphate group to glutamate to form L-glutamate 5-phosphate. The polypeptide is Glutamate 5-kinase (Geobacter sp. (strain M21)).